The sequence spans 275 residues: Ditrans,polycis-undecaprenyl-diphosphate synthase ((2E,6E)-farnesyl-diphosphate specific) (275 aa).

The active site involves Asp45. Position 45 (Asp45) interacts with Mg(2+). Substrate contacts are provided by residues 46–49 (GNGR), Trp50, Arg58, His62, and 90–92 (SSE). The Proton acceptor role is filled by Asn93. Residues Trp94, Arg96, Arg213, and 219–221 (RIS) each bind substrate. Position 232 (Glu232) interacts with Mg(2+).

The protein belongs to the UPP synthase family. In terms of assembly, homodimer. Requires Mg(2+) as cofactor.

It catalyses the reaction 8 isopentenyl diphosphate + (2E,6E)-farnesyl diphosphate = di-trans,octa-cis-undecaprenyl diphosphate + 8 diphosphate. Its function is as follows. Catalyzes the sequential condensation of isopentenyl diphosphate (IPP) with (2E,6E)-farnesyl diphosphate (E,E-FPP) to yield (2Z,6Z,10Z,14Z,18Z,22Z,26Z,30Z,34E,38E)-undecaprenyl diphosphate (di-trans,octa-cis-UPP). UPP is the precursor of glycosyl carrier lipid in the biosynthesis of bacterial cell wall polysaccharide components such as peptidoglycan and lipopolysaccharide. The chain is Ditrans,polycis-undecaprenyl-diphosphate synthase ((2E,6E)-farnesyl-diphosphate specific) from Shewanella oneidensis (strain ATCC 700550 / JCM 31522 / CIP 106686 / LMG 19005 / NCIMB 14063 / MR-1).